We begin with the raw amino-acid sequence, 88 residues long: uncharacterized protein (88 aa).

The N-terminal stretch at Met1–Ala25 is a signal peptide.

This is an uncharacterized protein from Escherichia coli O6:H1 (strain CFT073 / ATCC 700928 / UPEC).